The primary structure comprises 601 residues: tRNA 5-methylaminomethyl-2-thiouridine biosynthesis bifunctional protein MnmC (601 aa).

A tRNA (mnm(5)s(2)U34)-methyltransferase region spans residues 1-237 (MSDPTASPLI…KKQRLEAVAP (237 aa)). Residues 252-601 (IGGGIAGAAM…FSSRVATGAV (350 aa)) are FAD-dependent cmnm(5)s(2)U34 oxidoreductase.

In the N-terminal section; belongs to the methyltransferase superfamily. tRNA (mnm(5)s(2)U34)-methyltransferase family. It in the C-terminal section; belongs to the DAO family. Requires FAD as cofactor.

It is found in the cytoplasm. The enzyme catalyses 5-aminomethyl-2-thiouridine(34) in tRNA + S-adenosyl-L-methionine = 5-methylaminomethyl-2-thiouridine(34) in tRNA + S-adenosyl-L-homocysteine + H(+). In terms of biological role, catalyzes the last two steps in the biosynthesis of 5-methylaminomethyl-2-thiouridine (mnm(5)s(2)U) at the wobble position (U34) in tRNA. Catalyzes the FAD-dependent demodification of cmnm(5)s(2)U34 to nm(5)s(2)U34, followed by the transfer of a methyl group from S-adenosyl-L-methionine to nm(5)s(2)U34, to form mnm(5)s(2)U34. The polypeptide is tRNA 5-methylaminomethyl-2-thiouridine biosynthesis bifunctional protein MnmC (Caulobacter sp. (strain K31)).